Consider the following 81-residue polypeptide: ATP synthase subunit c (81 aa).

2 helical membrane passes run 5–25 (IAAG…IGAG) and 57–77 (VGLV…FVFA).

It belongs to the ATPase C chain family. As to quaternary structure, F-type ATPases have 2 components, F(1) - the catalytic core - and F(0) - the membrane proton channel. F(1) has five subunits: alpha(3), beta(3), gamma(1), delta(1), epsilon(1). F(0) has three main subunits: a(1), b(2) and c(10-14). The alpha and beta chains form an alternating ring which encloses part of the gamma chain. F(1) is attached to F(0) by a central stalk formed by the gamma and epsilon chains, while a peripheral stalk is formed by the delta and b chains.

Its subcellular location is the cell membrane. F(1)F(0) ATP synthase produces ATP from ADP in the presence of a proton or sodium gradient. F-type ATPases consist of two structural domains, F(1) containing the extramembraneous catalytic core and F(0) containing the membrane proton channel, linked together by a central stalk and a peripheral stalk. During catalysis, ATP synthesis in the catalytic domain of F(1) is coupled via a rotary mechanism of the central stalk subunits to proton translocation. Its function is as follows. Key component of the F(0) channel; it plays a direct role in translocation across the membrane. A homomeric c-ring of between 10-14 subunits forms the central stalk rotor element with the F(1) delta and epsilon subunits. This is ATP synthase subunit c from Mycobacterium sp. (strain JLS).